A 527-amino-acid chain; its full sequence is ATP synthase subunit alpha (527 aa).

177-184 (GDRQTGKT) serves as a coordination point for ATP.

Belongs to the ATPase alpha/beta chains family. In terms of assembly, F-type ATPases have 2 components, CF(1) - the catalytic core - and CF(0) - the membrane proton channel. CF(1) has five subunits: alpha(3), beta(3), gamma(1), delta(1), epsilon(1). CF(0) has four main subunits: a(1), b(1), b'(1) and c(9-12).

It is found in the cell membrane. It catalyses the reaction ATP + H2O + 4 H(+)(in) = ADP + phosphate + 5 H(+)(out). Produces ATP from ADP in the presence of a proton gradient across the membrane. The alpha chain is a regulatory subunit. The chain is ATP synthase subunit alpha from Roseiflexus sp. (strain RS-1).